Consider the following 205-residue polypeptide: Octanoyltransferase (205 aa).

The 176-residue stretch at 30–205 (NLSDELVWLL…ILKQEFHKIF (176 aa)) folds into the BPL/LPL catalytic domain. Residues 68 to 75 (RGGKYTYH), 140 to 142 (AFG), and 153 to 155 (GIA) contribute to the substrate site. Cys171 functions as the Acyl-thioester intermediate in the catalytic mechanism.

This sequence belongs to the LipB family.

It localises to the cytoplasm. It catalyses the reaction octanoyl-[ACP] + L-lysyl-[protein] = N(6)-octanoyl-L-lysyl-[protein] + holo-[ACP] + H(+). It functions in the pathway protein modification; protein lipoylation via endogenous pathway; protein N(6)-(lipoyl)lysine from octanoyl-[acyl-carrier-protein]: step 1/2. In terms of biological role, catalyzes the transfer of endogenously produced octanoic acid from octanoyl-acyl-carrier-protein onto the lipoyl domains of lipoate-dependent enzymes. Lipoyl-ACP can also act as a substrate although octanoyl-ACP is likely to be the physiological substrate. The polypeptide is Octanoyltransferase (Wolbachia pipientis subsp. Culex pipiens (strain wPip)).